A 418-amino-acid polypeptide reads, in one-letter code: Histidine--tRNA ligase (418 aa).

The protein belongs to the class-II aminoacyl-tRNA synthetase family. In terms of assembly, homodimer.

It is found in the cytoplasm. It catalyses the reaction tRNA(His) + L-histidine + ATP = L-histidyl-tRNA(His) + AMP + diphosphate + H(+). The polypeptide is Histidine--tRNA ligase (Thermoanaerobacter sp. (strain X514)).